The following is a 581-amino-acid chain: Protein GAMETOPHYTE DEFECTIVE 1 (581 aa).

Positions 452 to 467 (SMNIESTSEGGSMSPS) are enriched in polar residues. The tract at residues 452-512 (SMNIESTSEG…TTGHASNDEM (61 aa)) is disordered. Positions 496-512 (ENSKERATTGHASNDEM) are enriched in basic and acidic residues.

Belongs to the eukaryotic/archaeal RNase P protein component 3 family. In terms of assembly, probable component of nuclear RNase P and RNase MRP ribonucleoproteins. Interacts with POP5. Mostly expressed in inflorescence and roots, to a lower extent in leaves, and, at low levels, in siliques, seedlings and stems.

Its subcellular location is the nucleus. The protein localises to the nucleolus. It localises to the mitochondrion. Functionally, probable component of ribonuclease P, a ribonucleoprotein complex that generates mature tRNA molecules by cleaving their 5'-ends. May also be a component of the MRP ribonuclease complex, which cleaves pre-rRNA sequences. Required for female gametophyte development and male competence. This is Protein GAMETOPHYTE DEFECTIVE 1 from Arabidopsis thaliana (Mouse-ear cress).